Consider the following 329-residue polypeptide: Probable carboxylesterase 8 (329 aa).

The Involved in the stabilization of the negatively charged intermediate by the formation of the oxyanion hole motif lies at 73-75 (HGG). Active-site residues include S161, D264, and H294.

Belongs to the 'GDXG' lipolytic enzyme family. Expressed in leaves, stems, flowers and siliques.

The catalysed reaction is a carboxylic ester + H2O = an alcohol + a carboxylate + H(+). Carboxylesterase acting on esters with varying acyl chain length. This chain is Probable carboxylesterase 8 (CXE8), found in Arabidopsis thaliana (Mouse-ear cress).